The sequence spans 3118 residues: Laminin subunit alpha-2 (3118 aa).

A signal peptide spans 1–19; sequence MPAATAGILLLLLLGTLEG. One can recognise a Laminin N-terminal domain in the interval 31–282; that stretch reads QQRGLFPAVL…SVKDISVGGM (252 aa). Asparagine 51 and asparagine 85 each carry an N-linked (GlcNAc...) asparagine glycan. Disulfide bonds link cysteine 283–cysteine 292, cysteine 285–cysteine 303, cysteine 305–cysteine 314, cysteine 317–cysteine 337, cysteine 340–cysteine 349, and cysteine 342–cysteine 374. Laminin EGF-like domains lie at 283–339, 340–409, 410–464, and 465–513; these read CICY…ECEA, CNCH…PCQP, CHCD…DCQP, and CNCS…GCEE. N-linked (GlcNAc...) asparagine glycosylation is present at asparagine 299. Asparagine 359 and asparagine 376 each carry an N-linked (GlcNAc...) asparagine glycan. Intrachain disulfides connect cysteine 377–cysteine 386, cysteine 389–cysteine 407, cysteine 410–cysteine 422, cysteine 412–cysteine 438, cysteine 440–cysteine 449, cysteine 452–cysteine 462, cysteine 465–cysteine 478, cysteine 467–cysteine 482, cysteine 484–cysteine 493, and cysteine 496–cysteine 511. Asparagine 466 carries N-linked (GlcNAc...) asparagine glycosylation. A Laminin EGF-like 5; first part domain is found at 514–523; it reads CFCSGVSNRC. The 193-residue stretch at 527–719 folds into the Laminin IV type A 1 domain; sequence YWTYGNIQDM…DRRIATDVEV (193 aa). The Laminin EGF-like 5; second part domain maps to 720-752; that stretch reads CQCPPGYSGSSCETCWPRHRRVNGTIFGGICEP. N-linked (GlcNAc...) asparagine glycosylation occurs at asparagine 742. Disulfide bonds link cysteine 753–cysteine 762, cysteine 755–cysteine 769, cysteine 772–cysteine 781, cysteine 784–cysteine 800, cysteine 803–cysteine 818, cysteine 805–cysteine 828, cysteine 831–cysteine 840, cysteine 843–cysteine 858, cysteine 861–cysteine 875, cysteine 863–cysteine 882, cysteine 885–cysteine 894, cysteine 897–cysteine 911, cysteine 914–cysteine 926, cysteine 916–cysteine 933, cysteine 935–cysteine 944, cysteine 947–cysteine 960, cysteine 963–cysteine 975, cysteine 965–cysteine 981, cysteine 983–cysteine 992, cysteine 995–cysteine 1007, cysteine 1010–cysteine 1019, cysteine 1012–cysteine 1026, cysteine 1028–cysteine 1037, cysteine 1040–cysteine 1053, cysteine 1056–cysteine 1068, cysteine 1058–cysteine 1075, cysteine 1077–cysteine 1086, cysteine 1089–cysteine 1099, cysteine 1102–cysteine 1114, cysteine 1104–cysteine 1130, cysteine 1132–cysteine 1141, and cysteine 1144–cysteine 1159. Laminin EGF-like domains lie at 753–802, 803–860, 861–913, 914–962, 963–1009, 1010–1055, 1056–1101, and 1102–1161; these read CQCF…DCQP, CACP…SCQP, CQCN…NCQP, CRCN…GCLP, CNCN…GCIA, CDCS…GCKV, CNCS…LCTL, and CDCF…GCSS. Asparagine 919 carries an N-linked (GlcNAc...) asparagine glycan. Asparagine 1031 carries an N-linked (GlcNAc...) asparagine glycan. A glycan (N-linked (GlcNAc...) asparagine) is linked at asparagine 1057. The Laminin EGF-like 14; first part domain occupies 1162 to 1171; sequence CYCFGVTSQC. Residues 1172 to 1375 enclose the Laminin IV type A 2 domain; that stretch reads SEAKGLIRTW…GSPPAHLIER (204 aa). The Laminin EGF-like 14; second part domain occupies 1376–1415; sequence CDCPPGYSGLSCETCAPGFYRLRSEPGGRTPGPTLGTCVP. Disulfide bonds link cysteine 1378–cysteine 1387, cysteine 1416–cysteine 1425, cysteine 1418–cysteine 1432, cysteine 1435–cysteine 1444, cysteine 1447–cysteine 1462, cysteine 1465–cysteine 1480, cysteine 1467–cysteine 1490, cysteine 1493–cysteine 1502, cysteine 1505–cysteine 1520, cysteine 1523–cysteine 1535, cysteine 1525–cysteine 1542, cysteine 1544–cysteine 1553, and cysteine 1556–cysteine 1567. 3 consecutive Laminin EGF-like domains span residues 1416–1464, 1465–1522, and 1523–1569; these read CQCN…DCQP, CACP…SCQE, and CECD…ECVF. A domain II and I region spans residues 1570–2140; it reads CGDECTGLLL…NQARKQANSI (571 aa). N-linked (GlcNAc...) asparagine glycans are attached at residues asparagine 1593, asparagine 1610, asparagine 1696, asparagine 1806, asparagine 1897, asparagine 1912, asparagine 1916, asparagine 2013, asparagine 2024, asparagine 2041, asparagine 2122, and asparagine 2236. Residues 1662–1863 are a coiled coil; sequence QDAERTNSRA…DIKTKLPPMS (202 aa). Residues 1923-2146 adopt a coiled-coil conformation; the sequence is AYSNIKDYID…ANSIKVSVSS (224 aa). Laminin G-like domains lie at 2141 to 2324, 2336 to 2517, 2522 to 2706, 2759 to 2930, and 2929 to 3115; these read KVSV…CKGC, TIQF…TKGC, VYTV…IGRC, SKQF…VGTC, and TCFA…PVSC. Cysteines 2298 and 2324 form a disulfide. Asparagine 2356, asparagine 2431, and asparagine 2474 each carry an N-linked (GlcNAc...) asparagine glycan. Cysteine 2491 and cysteine 2517 are joined by a disulfide. N-linked (GlcNAc...) asparagine glycosylation is found at asparagine 2547, asparagine 2554, and asparagine 2644. Residues cysteine 2679 and cysteine 2706 are joined by a disulfide bond. Asparagine 2889 carries N-linked (GlcNAc...) asparagine glycosylation. 2 cysteine pairs are disulfide-bonded: cysteine 2905–cysteine 2930 and cysteine 3083–cysteine 3115.

In terms of assembly, laminin is a complex glycoprotein, consisting of three different polypeptide chains (alpha, beta, gamma), which are bound to each other by disulfide bonds into a cross-shaped molecule comprising one long and three short arms with globules at each end. Alpha-2 is a subunit of laminin-2 (laminin-211 or merosin), laminin-4 (laminin-221 or S-merosin) and laminin-12 (laminin-213). Interacts with FBLN1, FBLN2 and NID2.

Its subcellular location is the secreted. It is found in the extracellular space. The protein resides in the extracellular matrix. The protein localises to the basement membrane. Binding to cells via a high affinity receptor, laminin is thought to mediate the attachment, migration and organization of cells into tissues during embryonic development by interacting with other extracellular matrix components. This Mus musculus (Mouse) protein is Laminin subunit alpha-2 (Lama2).